Consider the following 714-residue polypeptide: Phosphoribosylformylglycinamidine synthase subunit PurL (714 aa).

Histidine 34 is a catalytic residue. Tyrosine 37 serves as a coordination point for ATP. A Mg(2+)-binding site is contributed by glutamate 78. Residues serine 79–histidine 82 and arginine 101 contribute to the substrate site. The active-site Proton acceptor is histidine 80. Aspartate 102 is a Mg(2+) binding site. Glutamine 226 serves as a coordination point for substrate. Aspartate 254 contacts Mg(2+). Glutamate 298–glutamine 300 serves as a coordination point for substrate. Positions 474 and 511 each coordinate ATP. Residue asparagine 512 participates in Mg(2+) binding. Position 514 (serine 514) interacts with substrate.

It belongs to the FGAMS family. As to quaternary structure, monomer. Part of the FGAM synthase complex composed of 1 PurL, 1 PurQ and 2 PurS subunits.

The protein localises to the cytoplasm. The enzyme catalyses N(2)-formyl-N(1)-(5-phospho-beta-D-ribosyl)glycinamide + L-glutamine + ATP + H2O = 2-formamido-N(1)-(5-O-phospho-beta-D-ribosyl)acetamidine + L-glutamate + ADP + phosphate + H(+). It participates in purine metabolism; IMP biosynthesis via de novo pathway; 5-amino-1-(5-phospho-D-ribosyl)imidazole from N(2)-formyl-N(1)-(5-phospho-D-ribosyl)glycinamide: step 1/2. Part of the phosphoribosylformylglycinamidine synthase complex involved in the purines biosynthetic pathway. Catalyzes the ATP-dependent conversion of formylglycinamide ribonucleotide (FGAR) and glutamine to yield formylglycinamidine ribonucleotide (FGAM) and glutamate. The FGAM synthase complex is composed of three subunits. PurQ produces an ammonia molecule by converting glutamine to glutamate. PurL transfers the ammonia molecule to FGAR to form FGAM in an ATP-dependent manner. PurS interacts with PurQ and PurL and is thought to assist in the transfer of the ammonia molecule from PurQ to PurL. In Methanothermobacter marburgensis (strain ATCC BAA-927 / DSM 2133 / JCM 14651 / NBRC 100331 / OCM 82 / Marburg) (Methanobacterium thermoautotrophicum), this protein is Phosphoribosylformylglycinamidine synthase subunit PurL.